Here is a 451-residue protein sequence, read N- to C-terminus: Serine--tRNA ligase (451 aa).

An L-serine-binding site is contributed by 258-260 (TSE). Position 289–291 (289–291 (RSE)) interacts with ATP. Glutamate 312 contacts L-serine. 376 to 379 (EISS) contributes to the ATP binding site. Serine 411 is an L-serine binding site.

The protein belongs to the class-II aminoacyl-tRNA synthetase family. Type-1 seryl-tRNA synthetase subfamily. Homodimer. The tRNA molecule binds across the dimer.

The protein localises to the cytoplasm. It carries out the reaction tRNA(Ser) + L-serine + ATP = L-seryl-tRNA(Ser) + AMP + diphosphate + H(+). The enzyme catalyses tRNA(Sec) + L-serine + ATP = L-seryl-tRNA(Sec) + AMP + diphosphate + H(+). It functions in the pathway aminoacyl-tRNA biosynthesis; selenocysteinyl-tRNA(Sec) biosynthesis; L-seryl-tRNA(Sec) from L-serine and tRNA(Sec): step 1/1. In terms of biological role, catalyzes the attachment of serine to tRNA(Ser). Is also able to aminoacylate tRNA(Sec) with serine, to form the misacylated tRNA L-seryl-tRNA(Sec), which will be further converted into selenocysteinyl-tRNA(Sec). The sequence is that of Serine--tRNA ligase from Bordetella pertussis (strain Tohama I / ATCC BAA-589 / NCTC 13251).